The chain runs to 121 residues: Large ribosomal subunit protein uL14 (121 aa).

The protein belongs to the universal ribosomal protein uL14 family. Part of the 50S ribosomal subunit. Forms a cluster with proteins L3 and L19. In the 70S ribosome, L14 and L19 interact and together make contacts with the 16S rRNA in bridges B5 and B8.

Its function is as follows. Binds to 23S rRNA. Forms part of two intersubunit bridges in the 70S ribosome. The chain is Large ribosomal subunit protein uL14 from Synechococcus sp. (strain CC9902).